The chain runs to 819 residues: Myosin light chain kinase 3 (819 aa).

The interval 146–460 (VPWRRGSPGD…PGVGNPEPEQ (315 aa)) is disordered. Ser152 is subject to Phosphoserine. Composition is skewed to basic and acidic residues over residues 158–170 (EENKERVEEEGAK) and 183–196 (DAREPGEESQKADV). Residues 307–318 (GPGPQCPGPPGL) are compositionally biased toward pro residues. Residues Ser355, Ser401, and Ser408 each carry the phosphoserine modification. Residues 515 to 770 (VCQHEVLGGG…ATQCLKHEWL (256 aa)) form the Protein kinase domain. Residues 521 to 529 (LGGGRFGQV) and Lys544 each bind ATP. Asp636 serves as the catalytic Proton acceptor.

Belongs to the protein kinase superfamily. CAMK Ser/Thr protein kinase family. It depends on Mg(2+) as a cofactor. Phosphorylated on serine residues.

The protein localises to the cytoplasm. It catalyses the reaction L-seryl-[myosin light chain] + ATP = O-phospho-L-seryl-[myosin light chain] + ADP + H(+). The catalysed reaction is L-threonyl-[myosin light chain] + ATP = O-phospho-L-threonyl-[myosin light chain] + ADP + H(+). Functionally, kinase that phosphorylates MYL2 in vitro. Promotes sarcomere formation in cardiomyocytes and increases cardiomyocyte contractility. The sequence is that of Myosin light chain kinase 3 (MYLK3) from Pongo abelii (Sumatran orangutan).